The chain runs to 105 residues: Meiotically up-regulated gene 52 protein (105 aa).

Functionally, has a role in meiosis. This Schizosaccharomyces pombe (strain 972 / ATCC 24843) (Fission yeast) protein is Meiotically up-regulated gene 52 protein (mug52).